Reading from the N-terminus, the 381-residue chain is Succinyl-diaminopimelate desuccinylase (381 aa).

Position 76 (H76) interacts with Zn(2+). The active site involves D78. A Zn(2+)-binding site is contributed by D107. The Proton acceptor role is filled by E140. Zn(2+)-binding residues include E141, E169, and H354.

The protein belongs to the peptidase M20A family. DapE subfamily. As to quaternary structure, homodimer. Zn(2+) is required as a cofactor. Co(2+) serves as cofactor.

The catalysed reaction is N-succinyl-(2S,6S)-2,6-diaminopimelate + H2O = (2S,6S)-2,6-diaminopimelate + succinate. It functions in the pathway amino-acid biosynthesis; L-lysine biosynthesis via DAP pathway; LL-2,6-diaminopimelate from (S)-tetrahydrodipicolinate (succinylase route): step 3/3. In terms of biological role, catalyzes the hydrolysis of N-succinyl-L,L-diaminopimelic acid (SDAP), forming succinate and LL-2,6-diaminopimelate (DAP), an intermediate involved in the bacterial biosynthesis of lysine and meso-diaminopimelic acid, an essential component of bacterial cell walls. The polypeptide is Succinyl-diaminopimelate desuccinylase (Gluconobacter oxydans (strain 621H) (Gluconobacter suboxydans)).